The sequence spans 226 residues: Hand transcription factor 1 (226 aa).

Residues 1 to 15 (MVKSTTAGNNAVSSL) show a composition bias toward polar residues. Residues 1–35 (MVKSTTAGNNAVSSLESTDSKKSRKEKSREKEHRR) form a disordered region. A basic motif region spans residues 23-36 (SRKEKSREKEHRRA). Positions 23 to 77 (SRKEKSREKEHRRAQCINSAFEILQQHIPYLKSEERKSLPKIKTLRLAMQYIDHL) constitute a bHLH domain. The helix-loop-helix motif stretch occupies residues 37-77 (QCINSAFEILQQHIPYLKSEERKSLPKIKTLRLAMQYIDHL).

It is found in the nucleus. In terms of biological role, probable transcription factor which regulates early embryonic myogenesis, in cooperation with transcription factors unc-120 and hlh-1. Involved in controlling the number and position of somatic gonadal precursor cells (SGPs) in the gonadal primordium, and embryonic body shape. This chain is Hand transcription factor 1, found in Caenorhabditis elegans.